Consider the following 280-residue polypeptide: Adenosylcobinamide-GDP ribazoletransferase (280 aa).

6 consecutive transmembrane segments (helical) span residues 44-64, 69-89, 111-131, 135-155, 189-209, and 226-246; these read GVGV…LFVL, STPL…TGAF, LVIM…MLAL, VALL…ALFV, ISVA…ALVI, and ALLQ…AVMA.

The protein belongs to the CobS family. Mg(2+) serves as cofactor.

It localises to the cell inner membrane. It carries out the reaction alpha-ribazole + adenosylcob(III)inamide-GDP = adenosylcob(III)alamin + GMP + H(+). The enzyme catalyses alpha-ribazole 5'-phosphate + adenosylcob(III)inamide-GDP = adenosylcob(III)alamin 5'-phosphate + GMP + H(+). The protein operates within cofactor biosynthesis; adenosylcobalamin biosynthesis; adenosylcobalamin from cob(II)yrinate a,c-diamide: step 7/7. Joins adenosylcobinamide-GDP and alpha-ribazole to generate adenosylcobalamin (Ado-cobalamin). Also synthesizes adenosylcobalamin 5'-phosphate from adenosylcobinamide-GDP and alpha-ribazole 5'-phosphate. The protein is Adenosylcobinamide-GDP ribazoletransferase of Albidiferax ferrireducens (strain ATCC BAA-621 / DSM 15236 / T118) (Rhodoferax ferrireducens).